The sequence spans 319 residues: Pantothenate kinase (319 aa).

An ATP-binding site is contributed by 101–108 (GSVAVGKS).

This sequence belongs to the prokaryotic pantothenate kinase family.

The protein localises to the cytoplasm. It carries out the reaction (R)-pantothenate + ATP = (R)-4'-phosphopantothenate + ADP + H(+). Its pathway is cofactor biosynthesis; coenzyme A biosynthesis; CoA from (R)-pantothenate: step 1/5. The protein is Pantothenate kinase of Clavibacter sepedonicus (Clavibacter michiganensis subsp. sepedonicus).